The chain runs to 336 residues: USG-1 protein homolog (336 aa).

Belongs to the aspartate-semialdehyde dehydrogenase family.

The chain is USG-1 protein homolog (usg) from Pseudomonas aeruginosa (strain ATCC 15692 / DSM 22644 / CIP 104116 / JCM 14847 / LMG 12228 / 1C / PRS 101 / PAO1).